Reading from the N-terminus, the 504-residue chain is 2,3-bisphosphoglycerate-independent phosphoglycerate mutase (504 aa).

Residues Asp13 and Ser63 each contribute to the Mn(2+) site. The active-site Phosphoserine intermediate is Ser63. Substrate contacts are provided by residues His124, 153 to 154 (RD), Arg183, Arg189, 254 to 257 (RADR), and Lys330. 5 residues coordinate Mn(2+): Asp397, His401, Asp438, His439, and His457.

The protein belongs to the BPG-independent phosphoglycerate mutase family. Monomer. Mn(2+) is required as a cofactor.

The catalysed reaction is (2R)-2-phosphoglycerate = (2R)-3-phosphoglycerate. The protein operates within carbohydrate degradation; glycolysis; pyruvate from D-glyceraldehyde 3-phosphate: step 3/5. Functionally, catalyzes the interconversion of 2-phosphoglycerate and 3-phosphoglycerate. The protein is 2,3-bisphosphoglycerate-independent phosphoglycerate mutase of Rhodopseudomonas palustris (strain ATCC BAA-98 / CGA009).